A 131-amino-acid chain; its full sequence is Small ribosomal subunit protein bS6 (131 aa).

Residues 96 to 131 (VTEASPMVKAKDERRERRDDFANETADDAEAGDSEE) are disordered. The span at 104–116 (KAKDERRERRDDF) shows a compositional bias: basic and acidic residues. A compositionally biased stretch (acidic residues) spans 120 to 131 (TADDAEAGDSEE).

Belongs to the bacterial ribosomal protein bS6 family.

In terms of biological role, binds together with bS18 to 16S ribosomal RNA. The polypeptide is Small ribosomal subunit protein bS6 (Salmonella arizonae (strain ATCC BAA-731 / CDC346-86 / RSK2980)).